A 257-amino-acid polypeptide reads, in one-letter code: Zinc finger protein 8 (257 aa).

3 disordered regions span residues Gly48–Asn92, Gln108–Ser128, and Gly214–Trp238. A compositionally biased stretch (polar residues) spans Asn50–Thr65. Over residues Lys66 to Asn92 the composition is skewed to basic and acidic residues. A C2H2-type zinc finger spans residues Phe95–His117. Residues Asn115–Arg126 show a composition bias toward basic residues.

In terms of tissue distribution, expressed in developing cauline leaves.

It is found in the nucleus. Its function is as follows. Probable transcription factor required for the initiation of inflorescence trichomes in response to gibberellin and cytokinin. Is not involved in the regulation of trichome branching. Is functionally equivalent to GIS2. Acts as a negative regulator of abscisic acid (ABA) signaling during germination and early seedling development. This is Zinc finger protein 8 from Arabidopsis thaliana (Mouse-ear cress).